A 709-amino-acid chain; its full sequence is Ribosomal RNA large subunit methyltransferase K/L (709 aa).

Residues 43–154 (LAYRITLWTR…NGVITIAMNF (112 aa)) form the THUMP domain.

Belongs to the methyltransferase superfamily. RlmKL family.

The protein localises to the cytoplasm. It catalyses the reaction guanosine(2445) in 23S rRNA + S-adenosyl-L-methionine = N(2)-methylguanosine(2445) in 23S rRNA + S-adenosyl-L-homocysteine + H(+). The enzyme catalyses guanosine(2069) in 23S rRNA + S-adenosyl-L-methionine = N(2)-methylguanosine(2069) in 23S rRNA + S-adenosyl-L-homocysteine + H(+). Its function is as follows. Specifically methylates the guanine in position 2445 (m2G2445) and the guanine in position 2069 (m7G2069) of 23S rRNA. In Shewanella baltica (strain OS195), this protein is Ribosomal RNA large subunit methyltransferase K/L.